The sequence spans 339 residues: RxLR effector protein SFI4 (339 aa).

A signal peptide spans 1 to 24; the sequence is MRVLRVTFLWALLLLVAFSASVYA. The RxLR-dEER motif lies at 51–74; sequence RGLRNSGMKLNDAKDFKGAIAKLR. 4 TPR repeats span residues 106-139, 190-223, 232-265, and 274-307; these read AQIL…VEKI, IEAS…QNGE, AELY…FRQR, and AFSL…AVQI.

Belongs to the RxLR effector family.

The protein resides in the secreted. The protein localises to the host nucleus. Its subcellular location is the host cytoplasm. Its function is as follows. Effector that suppresses flg22-induced post-translational MAP kinase activation in tomato but not in Arabidopsis. The perception of highly conserved pathogen- or microbe-associated molecular patterns (PAMPs/MAMPs), such as flg22, triggers converging signaling pathways recruiting MAP kinase cascades and inducing transcriptional re-programming, yielding a generic antimicrobial response. In Phytophthora infestans (strain T30-4) (Potato late blight agent), this protein is RxLR effector protein SFI4.